Consider the following 206-residue polypeptide: Small ribosomal subunit protein uS4 (206 aa).

Over residues 1 to 16 (MTKRQESKYKIDRRMG) the composition is skewed to basic and acidic residues. Residues 1-46 (MTKRQESKYKIDRRMGENIWGRPKSPVNRREYGPGQHGQRRKGKLS) form a disordered region. Positions 94-154 (RRLDAVVYRA…EKSKQLAIVL (61 aa)) constitute an S4 RNA-binding domain.

It belongs to the universal ribosomal protein uS4 family. Part of the 30S ribosomal subunit. Contacts protein S5. The interaction surface between S4 and S5 is involved in control of translational fidelity.

One of the primary rRNA binding proteins, it binds directly to 16S rRNA where it nucleates assembly of the body of the 30S subunit. In terms of biological role, with S5 and S12 plays an important role in translational accuracy. This is Small ribosomal subunit protein uS4 from Parvibaculum lavamentivorans (strain DS-1 / DSM 13023 / NCIMB 13966).